Here is a 255-residue protein sequence, read N- to C-terminus: Diphthine--ammonia ligase (255 aa).

It belongs to the Diphthine--ammonia ligase family.

The catalysed reaction is diphthine-[translation elongation factor 2] + NH4(+) + ATP = diphthamide-[translation elongation factor 2] + AMP + diphosphate + H(+). It functions in the pathway protein modification; peptidyl-diphthamide biosynthesis. In terms of biological role, amidase that catalyzes the last step of diphthamide biosynthesis using ammonium and ATP. Diphthamide biosynthesis consists in the conversion of an L-histidine residue in the translation elongation factor eEF-2 (EEF2) to diphthamide. The chain is Diphthine--ammonia ligase (dph6) from Danio rerio (Zebrafish).